Here is a 628-residue protein sequence, read N- to C-terminus: ATP-dependent zinc metalloprotease FtsH (628 aa).

The Stromal portion of the chain corresponds to 1 to 7; it reads MKLSWKT. The chain crosses the membrane as a helical span at residues 8-28; that stretch reads LLLWSLPIFVVGFFFWQGFLG. Over 29–118 the chain is Lumenal; the sequence is PTTTDVGSNI…AHPPKSTSAV (90 aa). A helical membrane pass occupies residues 119–139; the sequence is WGLLGNLLFPLILVGGLAFLF. At 140–628 the chain is on the stromal side; that stretch reads RRSNNASGGP…PEKNYYISQF (489 aa). 213-220 is an ATP binding site; it reads GPPGTGKT. H434 serves as a coordination point for Zn(2+). The active site involves E435. The Zn(2+) site is built by H438 and D512.

This sequence in the central section; belongs to the AAA ATPase family. The protein in the C-terminal section; belongs to the peptidase M41 family. In terms of assembly, homohexamer. Zn(2+) serves as cofactor.

Its subcellular location is the plastid. It is found in the chloroplast thylakoid membrane. Its function is as follows. Acts as a processive, ATP-dependent zinc metallopeptidase. This Porphyra purpurea (Red seaweed) protein is ATP-dependent zinc metalloprotease FtsH.